The following is a 155-amino-acid chain: Protein-export protein SecB (155 aa).

It belongs to the SecB family. Homotetramer, a dimer of dimers. One homotetramer interacts with 1 SecA dimer.

It localises to the cytoplasm. Functionally, one of the proteins required for the normal export of preproteins out of the cell cytoplasm. It is a molecular chaperone that binds to a subset of precursor proteins, maintaining them in a translocation-competent state. It also specifically binds to its receptor SecA. The protein is Protein-export protein SecB of Citrobacter koseri (strain ATCC BAA-895 / CDC 4225-83 / SGSC4696).